Reading from the N-terminus, the 309-residue chain is 1,4-dihydroxy-2-naphthoyl-CoA synthase (309 aa).

Substrate contacts are provided by residues arginine 53, 98–102, tyrosine 110, 152–156, threonine 179, serine 185, tyrosine 282, and lysine 297; these read SGGDQ and WAAGG.

The protein belongs to the enoyl-CoA hydratase/isomerase family. MenB subfamily.

The catalysed reaction is 2-succinylbenzoyl-CoA + H(+) = 1,4-dihydroxy-2-naphthoyl-CoA + H2O. It functions in the pathway quinol/quinone metabolism; 1,4-dihydroxy-2-naphthoate biosynthesis; 1,4-dihydroxy-2-naphthoate from chorismate: step 6/7. It participates in quinol/quinone metabolism; menaquinone biosynthesis. Functionally, converts o-succinylbenzoyl-CoA (OSB-CoA) to 1,4-dihydroxy-2-naphthoyl-CoA (DHNA-CoA). The protein is 1,4-dihydroxy-2-naphthoyl-CoA synthase of Mycolicibacterium smegmatis (strain ATCC 700084 / mc(2)155) (Mycobacterium smegmatis).